The following is a 943-amino-acid chain: Translation initiation factor IF-2 (943 aa).

The tract at residues 29-357 (LSVKSHSSSV…KPVTERKFHE (329 aa)) is disordered. Basic and acidic residues-rich tracts occupy residues 69 to 82 (PKEE…DKAS), 112 to 137 (FKAE…DNRN), 145 to 155 (QGKRHNNDRRN), 163 to 196 (DHNK…RDNA), and 224 to 253 (RQSE…EKQQ). Over residues 254–266 (AEVAVQKAAAETK) the composition is skewed to low complexity. Over residues 296–309 (KSRDNRRVNEDGPK) the composition is skewed to basic and acidic residues. The segment covering 313–332 (NNKWNNQNQVRNQRNSNWNK) has biased composition (low complexity). Residues 445-614 (ERAPVVTIMG…LLVAEVEELK (170 aa)) enclose the tr-type G domain. The G1 stretch occupies residues 454–461 (GHVDHGKT). 454 to 461 (GHVDHGKT) provides a ligand contact to GTP. The interval 479-483 (GITQH) is G2. Residues 500–503 (DTPG) form a G3 region. Residues 500 to 504 (DTPGH) and 554 to 557 (NKID) contribute to the GTP site. Residues 554 to 557 (NKID) form a G4 region. The segment at 590–592 (SAK) is G5.

Belongs to the TRAFAC class translation factor GTPase superfamily. Classic translation factor GTPase family. IF-2 subfamily.

It is found in the cytoplasm. Functionally, one of the essential components for the initiation of protein synthesis. Protects formylmethionyl-tRNA from spontaneous hydrolysis and promotes its binding to the 30S ribosomal subunits. Also involved in the hydrolysis of GTP during the formation of the 70S ribosomal complex. This is Translation initiation factor IF-2 from Streptococcus thermophilus (strain CNRZ 1066).